Here is a 440-residue protein sequence, read N- to C-terminus: Phosphatidylcholine-sterol acyltransferase (440 aa).

The signal sequence occupies residues 1-24 (MGLPGSPWQWVLLLLGLLLPPATS). An N-linked (GlcNAc...) asparagine glycan is attached at N44. C74 and C98 form a disulfide bridge. N108 is a glycosylation site (N-linked (GlcNAc...) asparagine). The active-site Nucleophile is S205. N296 carries an N-linked (GlcNAc...) asparagine glycan. A disulfide bridge links C337 with C380. The Charge relay system role is filled by D369. A glycan (N-linked (GlcNAc...) asparagine) is linked at N397. H401 serves as the catalytic Charge relay system. A glycan (N-linked (GlcNAc...) asparagine) is linked at N408.

The protein belongs to the AB hydrolase superfamily. Lipase family. As to expression, detected in blood plasma (at protein level).

The protein resides in the secreted. The enzyme catalyses a sterol + a 1,2-diacyl-sn-glycero-3-phosphocholine = a sterol ester + a 1-acyl-sn-glycero-3-phosphocholine. It carries out the reaction a 1-O-alkyl-2-acetyl-sn-glycero-3-phosphocholine + H2O = a 1-O-alkyl-sn-glycero-3-phosphocholine + acetate + H(+). It catalyses the reaction 1-hexadecanoyl-2-(9Z,12Z-octadecadienoyl)-sn-glycero-3-phosphocholine + H2O = (9Z,12Z)-octadecadienoate + 1-hexadecanoyl-sn-glycero-3-phosphocholine + H(+). The catalysed reaction is 1-hexadecanoyl-2-(5Z,8Z,11Z,14Z-eicosatetraenoyl)-sn-glycero-3-phosphocholine + H2O = 1-hexadecanoyl-sn-glycero-3-phosphocholine + (5Z,8Z,11Z,14Z)-eicosatetraenoate + H(+). The enzyme catalyses 1-hexadecanoyl-2-(5Z,8Z,11Z,14Z-eicosatetraenoyl)-sn-glycero-3-phosphocholine + cholesterol = cholesteryl (5Z,8Z,11Z,14Z)-eicosatetraenoate + 1-hexadecanoyl-sn-glycero-3-phosphocholine. It carries out the reaction 1-hexadecanoyl-2-(9Z-octadecenoyl)-sn-glycero-3-phosphocholine + cholesterol = cholesteryl (9Z-octadecenoate) + 1-hexadecanoyl-sn-glycero-3-phosphocholine. It catalyses the reaction a 1-hexadecanoyl-2-acyl-sn-glycero-3-phosphocholine + (24S)-hydroxycholesterol = (24S)-24-hydroxycholesterol ester + 1-hexadecanoyl-sn-glycero-3-phosphocholine. The catalysed reaction is (24S)-hydroxycholesterol + 1-hexadecanoyl-2-(9Z,12Z-octadecadienoyl)-sn-glycero-3-phosphocholine = (24S)-hydroxycholesterol 3-linoleoate + 1-hexadecanoyl-sn-glycero-3-phosphocholine. The enzyme catalyses 1-hexadecanoyl-2-(8Z,11Z,14Z-eicosatrienoyl)-sn-glycero-3-phosphocholine + cholesterol = cholesteryl (8Z,11Z,14Z)-eicosatrienoate + 1-hexadecanoyl-sn-glycero-3-phosphocholine. It carries out the reaction 1-hexadecanoyl-2-(5Z,8Z,11Z-eicosatrienoyl)-sn-glycero-3-phosphocholine + cholesterol = cholesteryl (5Z,8Z,11Z)-eicosatrienoate + 1-hexadecanoyl-sn-glycero-3-phosphocholine. It catalyses the reaction 1-hexadecanoyl-2-(5Z,8Z,11Z,14Z,17Z-eicosapentaenoyl)-sn-glycero-3-phosphocholine + cholesterol = (5Z,8Z,11Z,14Z,17Z-eicosapentaenoyl)-cholesterol + 1-hexadecanoyl-sn-glycero-3-phosphocholine. The catalysed reaction is 1-hexadecanoyl-2-(9Z,12Z-octadecadienoyl)-sn-glycero-3-phosphocholine + cholesterol = cholesteryl (9Z,12Z)-octadecadienoate + 1-hexadecanoyl-sn-glycero-3-phosphocholine. The enzyme catalyses 1-hexadecanoyl-2-(6Z,9Z,12Z-octadecatrienoyl)-sn-glycero-3-phosphocholine + cholesterol = (6Z,9Z,12Z-octadecatrienoyl)-cholesterol + 1-hexadecanoyl-sn-glycero-3-phosphocholine. It carries out the reaction 1-hexadecanoyl-2-(11Z,14Z,17Z-eicosatrienoyl)-sn-glycero-3-phosphocholine + cholesterol = (11Z,14Z,17Z-eicosatrienoyl)-cholesterol + 1-hexadecanoyl-sn-glycero-3-phosphocholine. It catalyses the reaction 1-hexadecanoyl-2-(9Z,12Z,15Z-octadecatrienoyl)-sn-glycero-3-phosphocholine + cholesterol = (9Z,12Z,15Z-octadecatrienoyl)-cholesterol + 1-hexadecanoyl-sn-glycero-3-phosphocholine. The catalysed reaction is a 1-O-alkyl-2-acetyl-sn-glycero-3-phosphocholine + 1-hexadecanoyl-sn-glycero-3-phosphocholine = 1-hexadecanoyl-2-acetyl-sn-glycero-3-phosphocholine + a 1-O-alkyl-sn-glycero-3-phosphocholine. Functionally, central enzyme in the extracellular metabolism of plasma lipoproteins. Synthesized mainly in the liver and secreted into plasma where it converts cholesterol and phosphatidylcholines (lecithins) to cholesteryl esters and lysophosphatidylcholines on the surface of high and low density lipoproteins (HDLs and LDLs). The cholesterol ester is then transported back to the liver. Also produced in the brain by primary astrocytes, and esterifies free cholesterol on nascent APOE-containing lipoproteins secreted from glia and influences cerebral spinal fluid (CSF) APOE- and APOA1 levels. Together with APOE and the cholesterol transporter ABCA1, plays a key role in the maturation of glial-derived, nascent lipoproteins. Required for remodeling high-density lipoprotein particles into their spherical forms. Has a preference for plasma 16:0-18:2 or 18:O-18:2 phosphatidylcholines. Catalyzes the hydrolysis of 1-O-alkyl-2-acetyl-sn-glycero-3-phosphocholine (platelet-activating factor or PAF) to 1-O-alkyl-sn-glycero-3-phosphocholine (lyso-PAF). Also catalyzes the transfer of the acetate group from PAF to 1-hexadecanoyl-sn-glycero-3-phosphocholine forming lyso-PAF. Catalyzes the esterification of (24S)-hydroxycholesterol (24(S)OH-C), also known as cerebrosterol to produce 24(S)OH-C monoesters. The sequence is that of Phosphatidylcholine-sterol acyltransferase (Lcat) from Rattus norvegicus (Rat).